Reading from the N-terminus, the 407-residue chain is 4-hydroxy-3-methylbut-2-en-1-yl diphosphate synthase (ferredoxin) (407 aa).

Residues C316, C319, C350, and E357 each coordinate [4Fe-4S] cluster.

It belongs to the IspG family. [4Fe-4S] cluster serves as cofactor.

It catalyses the reaction (2E)-4-hydroxy-3-methylbut-2-enyl diphosphate + 2 oxidized [2Fe-2S]-[ferredoxin] + H2O = 2-C-methyl-D-erythritol 2,4-cyclic diphosphate + 2 reduced [2Fe-2S]-[ferredoxin] + H(+). The protein operates within isoprenoid biosynthesis; isopentenyl diphosphate biosynthesis via DXP pathway; isopentenyl diphosphate from 1-deoxy-D-xylulose 5-phosphate: step 5/6. Converts 2C-methyl-D-erythritol 2,4-cyclodiphosphate (ME-2,4cPP) into 1-hydroxy-2-methyl-2-(E)-butenyl 4-diphosphate. This Prochlorococcus marinus (strain SARG / CCMP1375 / SS120) protein is 4-hydroxy-3-methylbut-2-en-1-yl diphosphate synthase (ferredoxin).